Consider the following 481-residue polypeptide: MMGRKNSKQVRYSNRLILINRLSQLSDPLICQILSHLPIKEVVTTSVLSTRWKNIWLSVPSLELIYSIFPNFNTFRSFGDRFFDSTRVSCIHNLKLYFDEHDACYLTSWINAFVTRNIRRLYVRRVRGNYFHELPLSLYVCETLVSLKLFHLTLVDPEFVSLPCLKIMHLNYVWFPNDATFERLVSSCPVLEDLKIDVLWNDGRVYRVKSRSLKRLRLLRSSTMVFDSVPGVVIDAPLICYLRINDRVSETYILNDLESNAKLDIHLDFGSEDFGEPSVSSRRSRIRSFLPAISKVMGLKISENTFKVIHHYSNLAQLPQFDNTSRLHVTLRVSELKWLPNFLECCPNLKSLIVAFNGDFEKMGSEEMNQISFLLRMKRIVDMTIFMYTSKVLLHSDNINQLSFSSVPKCLLSSLQFVELNAQILRFDGEILNLAKYFLENSSILQKLTLHPNKYGSTYANMLHKFRRRSRTCQFILTDLE.

One can recognise an F-box domain in the interval 19 to 69; sequence INRLSQLSDPLICQILSHLPIKEVVTTSVLSTRWKNIWLSVPSLELIYSIF. LRR repeat units follow at residues 123–151, 173–198, and 328–356; these read VRRV…KLFH, VWFP…KIDV, and HVTL…IVAF. One can recognise an FBD domain in the interval 401–452; sequence QLSFSSVPKCLLSSLQFVELNAQILRFDGEILNLAKYFLENSSILQKLTLHP.

This chain is Putative F-box/FBD/LRR-repeat protein At5g25850, found in Arabidopsis thaliana (Mouse-ear cress).